The chain runs to 869 residues: DNA mismatch repair protein MutS (869 aa).

Position 602–609 (Gly602–Ser609) interacts with ATP.

Belongs to the DNA mismatch repair MutS family.

Functionally, this protein is involved in the repair of mismatches in DNA. It is possible that it carries out the mismatch recognition step. This protein has a weak ATPase activity. The polypeptide is DNA mismatch repair protein MutS (Bacillus licheniformis (strain ATCC 14580 / DSM 13 / JCM 2505 / CCUG 7422 / NBRC 12200 / NCIMB 9375 / NCTC 10341 / NRRL NRS-1264 / Gibson 46)).